Here is a 426-residue protein sequence, read N- to C-terminus: Glutamate-1-semialdehyde 2,1-aminomutase (426 aa).

Lysine 265 bears the N6-(pyridoxal phosphate)lysine mark.

Belongs to the class-III pyridoxal-phosphate-dependent aminotransferase family. HemL subfamily. In terms of assembly, homodimer. Requires pyridoxal 5'-phosphate as cofactor.

It localises to the cytoplasm. It carries out the reaction (S)-4-amino-5-oxopentanoate = 5-aminolevulinate. Its pathway is porphyrin-containing compound metabolism; protoporphyrin-IX biosynthesis; 5-aminolevulinate from L-glutamyl-tRNA(Glu): step 2/2. This chain is Glutamate-1-semialdehyde 2,1-aminomutase, found in Pseudoalteromonas translucida (strain TAC 125).